Reading from the N-terminus, the 851-residue chain is DEAD-box ATP-dependent RNA helicase 29 (851 aa).

Residues 1-49 (MARLNPSKPSSRGGKPRSSSADAMAEHKPPPGRPKREGEGASKKKAKSG) are disordered. Residues 7-20 (SKPSSRGGKPRSSS) show a composition bias toward low complexity. Residues 24-42 (MAEHKPPPGRPKREGEGAS) show a composition bias toward basic and acidic residues. Positions 49–77 (GGFESMGLCEEVYRGVRHKGYRVPTPIQR) match the Q motif motif. In terms of domain architecture, Helicase ATP-binding spans 80-253 (MPLILAGHDI…KAGLRDPQIV (174 aa)). 93-100 (ARTGSGKT) serves as a coordination point for ATP. Residues 201–204 (DEAD) carry the DEAD box motif. The Helicase C-terminal domain occupies 277–426 (KLAALLYLVR…PAPTEEELLK (150 aa)). The disordered stretch occupies residues 702-851 (KWQQKTHRSI…KGKMKGKGTR (150 aa)). The span at 733–746 (RGNRKHTAAGRGRR) shows a compositional bias: basic residues. Composition is skewed to basic and acidic residues over residues 773–787 (DIAR…ESKF) and 796–825 (RHDG…DGNG). Over residues 841–851 (GKGKMKGKGTR) the composition is skewed to basic residues.

This sequence belongs to the DEAD box helicase family. DDX54/DBP10 subfamily.

It catalyses the reaction ATP + H2O = ADP + phosphate + H(+). This is DEAD-box ATP-dependent RNA helicase 29 from Oryza sativa subsp. indica (Rice).